A 305-amino-acid polypeptide reads, in one-letter code: Probable GTP 3',8-cyclase (305 aa).

A Radical SAM core domain is found at 6 to 228 (NHRRPLVSLR…MTRKFMQDRK (223 aa)). Residue Arg-15 participates in GTP binding. Positions 22 and 26 each coordinate [4Fe-4S] cluster. Tyr-28 contributes to the S-adenosyl-L-methionine binding site. Residue Cys-29 participates in [4Fe-4S] cluster binding. Arg-62 is a binding site for GTP. Gly-66 lines the S-adenosyl-L-methionine pocket. Thr-92 is a GTP binding site. Ser-116 lines the S-adenosyl-L-methionine pocket. Position 153 (Lys-153) interacts with GTP. [4Fe-4S] cluster is bound by residues Cys-249 and Cys-252. 254–256 (RLR) lines the GTP pocket. Cys-266 lines the [4Fe-4S] cluster pocket.

Belongs to the radical SAM superfamily. MoaA family. Requires [4Fe-4S] cluster as cofactor.

The catalysed reaction is GTP + AH2 + S-adenosyl-L-methionine = (8S)-3',8-cyclo-7,8-dihydroguanosine 5'-triphosphate + 5'-deoxyadenosine + L-methionine + A + H(+). It functions in the pathway cofactor biosynthesis; molybdopterin biosynthesis. Its function is as follows. Catalyzes the cyclization of GTP to (8S)-3',8-cyclo-7,8-dihydroguanosine 5'-triphosphate. The protein is Probable GTP 3',8-cyclase of Methanothermobacter marburgensis (strain ATCC BAA-927 / DSM 2133 / JCM 14651 / NBRC 100331 / OCM 82 / Marburg) (Methanobacterium thermoautotrophicum).